The following is a 340-amino-acid chain: S-adenosylmethionine:tRNA ribosyltransferase-isomerase (340 aa).

Belongs to the QueA family. Monomer.

It is found in the cytoplasm. The catalysed reaction is 7-aminomethyl-7-carbaguanosine(34) in tRNA + S-adenosyl-L-methionine = epoxyqueuosine(34) in tRNA + adenine + L-methionine + 2 H(+). The protein operates within tRNA modification; tRNA-queuosine biosynthesis. Transfers and isomerizes the ribose moiety from AdoMet to the 7-aminomethyl group of 7-deazaguanine (preQ1-tRNA) to give epoxyqueuosine (oQ-tRNA). This Chromobacterium violaceum (strain ATCC 12472 / DSM 30191 / JCM 1249 / CCUG 213 / NBRC 12614 / NCIMB 9131 / NCTC 9757 / MK) protein is S-adenosylmethionine:tRNA ribosyltransferase-isomerase.